Reading from the N-terminus, the 267-residue chain is NAD kinase 2 (267 aa).

Aspartate 50 (proton acceptor) is an active-site residue. Residues 50–51 (DG), lysine 55, 122–123 (NE), arginine 149, aspartate 151, 162–167 (TAYNKS), and alanine 186 contribute to the NAD(+) site.

It belongs to the NAD kinase family. It depends on a divalent metal cation as a cofactor.

The protein localises to the cytoplasm. It carries out the reaction NAD(+) + ATP = ADP + NADP(+) + H(+). Involved in the regulation of the intracellular balance of NAD and NADP, and is a key enzyme in the biosynthesis of NADP. Catalyzes specifically the phosphorylation on 2'-hydroxyl of the adenosine moiety of NAD to yield NADP. In Listeria monocytogenes serovar 1/2a (strain ATCC BAA-679 / EGD-e), this protein is NAD kinase 2.